A 517-amino-acid polypeptide reads, in one-letter code: GMP synthase [glutamine-hydrolyzing] (517 aa).

The region spanning 11-202 (KIIVLDYGSQ…AFDVCHAEAN (192 aa)) is the Glutamine amidotransferase type-1 domain. Cys88 serves as the catalytic Nucleophile. Catalysis depends on residues His176 and Glu178. Residues 203–392 (WSMDDFITKQ…LGMPHSLVWR (190 aa)) form the GMPS ATP-PPase domain. ATP is bound at residue 230–236 (SGGVDSS).

In terms of assembly, homodimer.

The enzyme catalyses XMP + L-glutamine + ATP + H2O = GMP + L-glutamate + AMP + diphosphate + 2 H(+). The protein operates within purine metabolism; GMP biosynthesis; GMP from XMP (L-Gln route): step 1/1. In terms of biological role, catalyzes the synthesis of GMP from XMP. The chain is GMP synthase [glutamine-hydrolyzing] (guaA) from Lacticaseibacillus rhamnosus (Lactobacillus rhamnosus).